The following is a 289-amino-acid chain: 4-diphosphocytidyl-2-C-methyl-D-erythritol kinase (289 aa).

Lys-10 is a catalytic residue. 94–104 (PVAAGLAGGSS) contributes to the ATP binding site. The active site involves Asp-136.

This sequence belongs to the GHMP kinase family. IspE subfamily.

The enzyme catalyses 4-CDP-2-C-methyl-D-erythritol + ATP = 4-CDP-2-C-methyl-D-erythritol 2-phosphate + ADP + H(+). It functions in the pathway isoprenoid biosynthesis; isopentenyl diphosphate biosynthesis via DXP pathway; isopentenyl diphosphate from 1-deoxy-D-xylulose 5-phosphate: step 3/6. Catalyzes the phosphorylation of the position 2 hydroxy group of 4-diphosphocytidyl-2C-methyl-D-erythritol. The sequence is that of 4-diphosphocytidyl-2-C-methyl-D-erythritol kinase from Geobacillus sp. (strain WCH70).